Reading from the N-terminus, the 202-residue chain is Small ribosomal subunit protein uS4c (202 aa).

Residues 90 to 153 form the S4 RNA-binding domain; the sequence is MRLDNIIFRL…KSQAIISKNI (64 aa).

The protein belongs to the universal ribosomal protein uS4 family. In terms of assembly, part of the 30S ribosomal subunit. Contacts protein S5. The interaction surface between S4 and S5 is involved in control of translational fidelity.

It is found in the plastid. The protein resides in the chloroplast. Functionally, one of the primary rRNA binding proteins, it binds directly to 16S rRNA where it nucleates assembly of the body of the 30S subunit. With S5 and S12 plays an important role in translational accuracy. The chain is Small ribosomal subunit protein uS4c (rps4) from Splachnum sphaericum (Pinkstink dung moss).